The sequence spans 405 residues: Scarecrow-like protein 23 (405 aa).

Positions M1 to K20 are disordered. A GRAS domain is found at E31 to K400. The interval I38 to S102 is leucine repeat I (LRI). The LxCxE motif signature appears at L45–E49. A VHIID region spans residues L121–G186. The VHIID signature appears at V152 to D156. A leucine repeat II (LRII) region spans residues S196–S228. Residues V238 to N327 form a PFYRE region. Residues A330 to K400 are SAW.

Belongs to the GRAS family. As to quaternary structure, interacts with SHR. As to expression, expressed in seedlings, cotyledons, shoot apex, leaves and flowers.

The protein resides in the nucleus. Functionally, probable transcription factor involved in plant development. The polypeptide is Scarecrow-like protein 23 (SCL23) (Arabidopsis thaliana (Mouse-ear cress)).